The chain runs to 163 residues: Pheromone-binding protein (163 aa).

An N-terminal signal peptide occupies residues 1–22 (MMSVRLMLVVAVWLCLRVDASQ). Cystine bridges form between Cys39–Cys74, Cys70–Cys129, and Cys117–Cys138.

Belongs to the PBP/GOBP family. In terms of tissue distribution, antenna.

This major soluble protein in olfactory sensilla of male moths might serve to solubilize the extremely hydrophobic pheromone molecules and to transport pheromone through the aqueous lymph to receptors located on olfactory cilia. This chain is Pheromone-binding protein, found in Heliothis virescens (Tobacco budworm moth).